Reading from the N-terminus, the 134-residue chain is Major pollen allergen Lol p 11 (134 aa).

3 disulfide bridges follow: cysteine 14–cysteine 85, cysteine 17–cysteine 127, and cysteine 38–cysteine 73. N-linked (GlcNAc...) asparagine glycosylation is present at asparagine 24.

This sequence belongs to the Ole e I family.

The protein localises to the secreted. This Lolium perenne (Perennial ryegrass) protein is Major pollen allergen Lol p 11.